A 402-amino-acid chain; its full sequence is Deoxyguanosinetriphosphate triphosphohydrolase-like protein (402 aa).

Residues 73-217 (RLTHTIEVAQ…AAIADDIAYN (145 aa)) enclose the HD domain.

This sequence belongs to the dGTPase family. Type 2 subfamily.

In Brucella anthropi (strain ATCC 49188 / DSM 6882 / CCUG 24695 / JCM 21032 / LMG 3331 / NBRC 15819 / NCTC 12168 / Alc 37) (Ochrobactrum anthropi), this protein is Deoxyguanosinetriphosphate triphosphohydrolase-like protein.